A 366-amino-acid polypeptide reads, in one-letter code: MAP kinase-activated protein kinase 2 (366 aa).

One can recognise a Protein kinase domain in the interval 30-291 (KVTSQVLGLG…ITEFMNHPWI (262 aa)). Residues 36-44 (LGLGINGKV) and Lys-59 contribute to the ATP site. 105 to 107 (ECL) provides a ligand contact to staurosporine. Asp-152 (proton acceptor) is an active-site residue. The residue at position 188 (Thr-188) is a Phosphothreonine; by MAPK14. Ser-238 is subject to Phosphoserine; by MAPK14. Ser-294 bears the Phosphoserine; by autocatalysis mark. The interval 294–330 (STKVPQTPLHTSRVLKEDKERWEDVKEEMTSALATMR) is autoinhibitory helix. Residue Thr-300 is modified to Phosphothreonine; by MAPK14. Lys-319 is covalently cross-linked (Glycyl lysine isopeptide (Lys-Gly) (interchain with G-Cter in SUMO)). Residues 322–331 (MTSALATMRV) carry the Nuclear export signal (NES) motif. A p38 MAPK-binding site region spans residues 332–356 (DYEQIKIKKIEDASNPLLLKRRKKA). 2 short sequence motifs (bipartite nuclear localization signal) span residues 337–340 (KIKK) and 351–355 (KRRKK).

It belongs to the protein kinase superfamily. CAMK Ser/Thr protein kinase family. In terms of assembly, heterodimer with p38-alpha/MAPK14; this heterodimer forms a stable complex: molecules are positioned 'face to face' so that the ATP-binding sites of both kinases are at the heterodimer interface. Interacts with PHC2. Interacts with HSF1. Sumoylation inhibits the protein kinase activity. Post-translationally, phosphorylated and activated by MAP kinase p38-alpha/MAPK14 at Thr-188, Ser-238 and Thr-300.

The protein localises to the cytoplasm. The protein resides in the nucleus. It carries out the reaction L-seryl-[protein] + ATP = O-phospho-L-seryl-[protein] + ADP + H(+). It catalyses the reaction L-threonyl-[protein] + ATP = O-phospho-L-threonyl-[protein] + ADP + H(+). With respect to regulation, activated following phosphorylation by p38-alpha/MAPK14 following various stresses. Inhibited following sumoylation. Specifically inhibited by pyrrolopyridine inhibitors. Functionally, stress-activated serine/threonine-protein kinase involved in cytokine production, endocytosis, reorganization of the cytoskeleton, cell migration, cell cycle control, chromatin remodeling, DNA damage response and transcriptional regulation. Following stress, it is phosphorylated and activated by MAP kinase p38-alpha/MAPK14, leading to phosphorylation of substrates. Phosphorylates serine in the peptide sequence, Hyd-X-R-X(2)-S, where Hyd is a large hydrophobic residue. Phosphorylates ALOX5, CDC25B, CDC25C, CEP131, ELAVL1, HNRNPA0, HSP27/HSPB1, KRT18, KRT20, LIMK1, LSP1, PABPC1, PARN, PDE4A, RCSD1, RPS6KA3, TAB3 and TTP/ZFP36. Phosphorylates HSF1; leading to the interaction with HSP90 proteins and inhibiting HSF1 homotrimerization, DNA-binding and transactivation activities. Mediates phosphorylation of HSP27/HSPB1 in response to stress, leading to dissociation of HSP27/HSPB1 from large small heat-shock protein (sHsps) oligomers and impairment of their chaperone activities and ability to protect against oxidative stress effectively. Involved in inflammatory response by regulating tumor necrosis factor (TNF) and IL6 production post-transcriptionally: acts by phosphorylating AU-rich elements (AREs)-binding proteins ELAVL1, HNRNPA0, PABPC1 and TTP/ZFP36, leading to regulate the stability and translation of TNF and IL6 mRNAs. Phosphorylation of TTP/ZFP36, a major post-transcriptional regulator of TNF, promotes its binding to 14-3-3 proteins and reduces its ARE mRNA affinity leading to inhibition of dependent degradation of ARE-containing transcripts. Phosphorylates CEP131 in response to cellular stress following ultraviolet irradiation which promotes binding of CEP131 to 14-3-3 proteins and inhibits formation of novel centriolar satellites. Also involved in late G2/M checkpoint following DNA damage through a process of post-transcriptional mRNA stabilization: following DNA damage, relocalizes from nucleus to cytoplasm and phosphorylates HNRNPA0 and PARN, leading to stabilization of GADD45A mRNA. Involved in toll-like receptor signaling pathway (TLR) in dendritic cells: required for acute TLR-induced macropinocytosis by phosphorylating and activating RPS6KA3. The polypeptide is MAP kinase-activated protein kinase 2 (MAPKAPK2) (Oryctolagus cuniculus (Rabbit)).